The following is an 839-amino-acid chain: Homeobox-leucine zipper protein HOX10 (839 aa).

2 disordered regions span residues 1-24 (MAAA…SGMD) and 132-157 (QNTP…RDAS). The homeobox DNA-binding region spans 24–87 (DSGKYVRYTP…NRRCRDKQRK (64 aa)). Residues 91–134 (RLQAVNRKLTAMNKLLMEENERLQKQVSQLVHENAHMRQQLQNT) are a coiled coil. One can recognise an START domain in the interval 155-383 (DASNPSGLLS…IAQETSGEVV (229 aa)).

Belongs to the HD-ZIP homeobox family. Class III subfamily. In terms of tissue distribution, expressed in stems, leaf sheaths and blades and panicles.

It localises to the nucleus. In terms of biological role, probable transcription factor. The polypeptide is Homeobox-leucine zipper protein HOX10 (HOX10) (Oryza sativa subsp. japonica (Rice)).